We begin with the raw amino-acid sequence, 594 residues long: ATP-dependent zinc metalloprotease FtsH 1 (594 aa).

The Cytoplasmic segment spans residues M1–R2. A helical membrane pass occupies residues W3–M23. Topologically, residues E24–P92 are extracellular. The chain crosses the membrane as a helical span at residues I93–W113. Residues F114–Q594 lie on the Cytoplasmic side of the membrane. Position 186–193 (G186–T193) interacts with ATP. H408 is a binding site for Zn(2+). E409 is a catalytic residue. Zn(2+) contacts are provided by H412 and D485.

In the central section; belongs to the AAA ATPase family. It in the C-terminal section; belongs to the peptidase M41 family. In terms of assembly, homohexamer. Zn(2+) serves as cofactor.

Its subcellular location is the cell membrane. Its function is as follows. Acts as a processive, ATP-dependent zinc metallopeptidase for both cytoplasmic and membrane proteins. Plays a role in the quality control of integral membrane proteins. This chain is ATP-dependent zinc metalloprotease FtsH 1, found in Symbiobacterium thermophilum (strain DSM 24528 / JCM 14929 / IAM 14863 / T).